The following is a 129-amino-acid chain: Ribulose bisphosphate carboxylase small subunit (129 aa).

This sequence belongs to the RuBisCO small chain family. In terms of assembly, heterohexadecamer of 8 large and 8 small subunits.

RuBisCO catalyzes two reactions: the carboxylation of D-ribulose 1,5-bisphosphate, the primary event in carbon dioxide fixation, as well as the oxidative fragmentation of the pentose substrate. Both reactions occur simultaneously and in competition at the same active site. Although the small subunit is not catalytic it is essential for maximal activity. This is Ribulose bisphosphate carboxylase small subunit from Cereibacter sphaeroides (Rhodobacter sphaeroides).